A 395-amino-acid polypeptide reads, in one-letter code: Membrane glycoprotein spo14 (395 aa).

Over 1-346 the chain is Cytoplasmic; it reads MAELHLSFPA…KLEDAGVILR (346 aa). WD repeat units lie at residues 250–285 and 290–326; these read MIRD…RFMS and KLSQ…CLQF. The helical; Signal-anchor for type II membrane protein transmembrane segment at 347–367 threads the bilayer; the sequence is LSLMFPFVLAILYFYLQLLFP. Residues 368 to 395 lie on the Lumenal side of the membrane; it reads DEKLDAIHRFFSFILHIFSKYTIRNYDL.

Its subcellular location is the endoplasmic reticulum membrane. The protein localises to the golgi apparatus. The protein resides in the cis-Golgi network membrane. In terms of biological role, required for the formation of transport vesicles from the ER. This function involves the cytoplasmic domain of the protein, which is thought to interact with the small GTP-binding protein sar1. This Schizosaccharomyces pombe (strain 972 / ATCC 24843) (Fission yeast) protein is Membrane glycoprotein spo14 (spo14).